The sequence spans 83 residues: uncharacterized protein (83 aa).

A run of 2 helical transmembrane segments spans residues 23–43 (FSLWFTHITFIGLFLMFQLIK) and 56–76 (TIFVVTCIIAILLWIIYCVFL).

It localises to the cell membrane. This is an uncharacterized protein from Bacillus subtilis (strain 168).